Reading from the N-terminus, the 192-residue chain is Probable GTP-binding protein EngB (192 aa).

The region spanning 22–192 (GRPEIVFVGR…LLERLDLFSQ (171 aa)) is the EngB-type G domain. GTP is bound by residues 30–37 (GRSNVGKS), 57–61 (GKTRL), 75–78 (DLPG), 142–145 (TKWD), and 172–174 (YSS). Mg(2+) contacts are provided by serine 37 and threonine 59.

This sequence belongs to the TRAFAC class TrmE-Era-EngA-EngB-Septin-like GTPase superfamily. EngB GTPase family. Mg(2+) serves as cofactor.

In terms of biological role, necessary for normal cell division and for the maintenance of normal septation. The polypeptide is Probable GTP-binding protein EngB (Chlorobaculum parvum (strain DSM 263 / NCIMB 8327) (Chlorobium vibrioforme subsp. thiosulfatophilum)).